The sequence spans 262 residues: Phycoerythrobilin:ferredoxin oxidoreductase (262 aa).

Belongs to the HY2 family.

The enzyme catalyses (3Z)-phycoerythrobilin + oxidized 2[4Fe-4S]-[ferredoxin] = 15,16-dihydrobiliverdin + reduced 2[4Fe-4S]-[ferredoxin] + 2 H(+). Functionally, catalyzes the two-electron reduction of the C2 and C3(1) diene system of 15,16-dihydrobiliverdin. The sequence is that of Phycoerythrobilin:ferredoxin oxidoreductase (pebB) from Parasynechococcus marenigrum (strain WH8102).